The following is a 380-amino-acid chain: cAMP-dependent protein kinase type I-alpha regulatory subunit (380 aa).

Residue Met-1 is modified to N-acetylmethionine. Ala-2 is subject to N-acetylalanine; in cAMP-dependent protein kinase type I-alpha regulatory subunit, N-terminally processed. A dimerization and phosphorylation region spans residues 2 to 135 (ASGTTASEEE…ALAKAIEKNV (134 aa)). A phosphoserine mark is found at Ser-3, Ser-76, and Ser-82. The interval 64–96 (IQNLQKAGSRADSREDEISPPPPNPVVKGRRRR) is disordered. The Pseudophosphorylation motif signature appears at 95–99 (RRGAI). Phosphoserine is present on Ser-100. 3',5'-cyclic AMP is bound by residues 136–253 (LFSH…SKVS), Glu-201, Arg-210, 254–380 (ILES…SLSV), Glu-325, and Arg-334. The residue at position 257 (Ser-257) is a Phosphoserine.

Belongs to the cAMP-dependent kinase regulatory chain family. As to quaternary structure, the inactive holoenzyme is composed of two regulatory chains and two catalytic chains. Activation by cAMP releases the two active catalytic monomers and the regulatory dimer. Interacts with PRKACA and PRKACB. PRKAR1A also interacts with RFC2; the complex may be involved in cell survival. Interacts with AKAP4. Interacts with RARA; the interaction occurs in the presence of cAMP or FSH and regulates RARA transcriptional activity. Interacts with the phosphorylated form of PJA2. Interacts with CBFA2T3. Interacts with PRKX; regulates this cAMP-dependent protein kinase. Interacts with smAKAP; this interaction may target PRKAR1A to the plasma membrane. Interacts with AICDA. Post-translationally, the pseudophosphorylation site binds to the substrate-binding region of the catalytic chain, resulting in the inhibition of its activity. The physiological significance of the in vitro phosphorylation of a proximal serine is unclear. Four types of regulatory chains are found: I-alpha, I-beta, II-alpha, and II-beta. Their expression varies among tissues and is in some cases constitutive and in others inducible.

It localises to the cell membrane. In terms of biological role, regulatory subunit of the cAMP-dependent protein kinases involved in cAMP signaling in cells. This chain is cAMP-dependent protein kinase type I-alpha regulatory subunit (PRKAR1A), found in Bos taurus (Bovine).